Consider the following 158-residue polypeptide: Chromobox protein homolog 7 (158 aa).

The Chromo domain maps to 11 to 69 (FAVESIRKKRVRKGKVEYLVKWKGWPPKYSTWEPEEHILDPRLVMAYEEKEERDRASGY). Residues 60-127 (KEERDRASGY…WTPTLPSSEV (68 aa)) form a disordered region. The span at 68 to 78 (GYRKRGPKPRR) shows a compositional bias: basic residues.

Component of a PRC1-like complex. Distinct PRC1-like core complexes are composed of a RING1 subunit (RING1B or RING1A), one of the six PCGF proteins (PCGF1-6), one PHC protein (PHC1-3) and one of the CBX proteins (CBX2, CBX4, CBX6, CBX7 or CBX8). The composition of the PRC1 complex may differ between the PRC1 complex in pluripotent embryonic stem cells containing RNF2, CBX7 and PCGF2, and the PRC1 complex in differentiating cells containing RNF2, CBX2, CBX4 and BMI1. Interacts with RING1. Interacts with RNF2, PHC1 and PCGF2. Interacts (via chromodomain) with histone H3K9Me3 and H3K27me3. Interacts with H3K9Me2 and H4K20Me1. Interacts (via chromodomain) with single-stranded and double-stranded RNA; RNA binding seems to be required for the localization to chromatin. Interacts with PCGF1, PCGF3, PCGF5 and PCGF6. In terms of tissue distribution, expressed in embryonic stem cells.

It is found in the nucleus. The protein resides in the chromosome. Functionally, component of a Polycomb group (PcG) multiprotein PRC1-like complex, a complex class required to maintain the transcriptionally repressive state of many genes, including Hox genes, throughout development. PcG PRC1 complex acts via chromatin remodeling and modification of histones; it mediates monoubiquitination of histone H2A 'Lys-119', rendering chromatin heritably changed in its expressibility. Promotes histone H3 trimethylation at 'Lys-9' (H3K9me3). Binds to histone H3 trimethylated at 'Lys-9' (H3K9me3) or at 'Lys-27' (H3K27me3). Trimethylation at 'Lys-27' (H3K27me3) is important for chromatin recruitment. May possibly also bind trimethylated lysine residues in other proteins (in vitro). Binds non-coding, single-stranded RNA and double-stranded RNA. Plays a role in the timely repression of differentiation-specific genes in pluripotent embryonic stem cells to maintain the undifferentiated state. Regulator of cellular lifespan by maintaining the repression of CDKN2A, but not by inducing telomerase activity. The chain is Chromobox protein homolog 7 (Cbx7) from Mus musculus (Mouse).